The sequence spans 115 residues: Holo-[acyl-carrier-protein] synthase (115 aa).

The Mg(2+) site is built by Asp-6 and Glu-51.

The protein belongs to the P-Pant transferase superfamily. AcpS family. Requires Mg(2+) as cofactor.

The protein localises to the cytoplasm. The catalysed reaction is apo-[ACP] + CoA = holo-[ACP] + adenosine 3',5'-bisphosphate + H(+). In terms of biological role, transfers the 4'-phosphopantetheine moiety from coenzyme A to a Ser of acyl-carrier-protein. The polypeptide is Holo-[acyl-carrier-protein] synthase (Campylobacter jejuni subsp. jejuni serotype O:2 (strain ATCC 700819 / NCTC 11168)).